Consider the following 212-residue polypeptide: Probable nicotinate-nucleotide adenylyltransferase (212 aa).

The protein belongs to the NadD family.

It carries out the reaction nicotinate beta-D-ribonucleotide + ATP + H(+) = deamido-NAD(+) + diphosphate. It functions in the pathway cofactor biosynthesis; NAD(+) biosynthesis; deamido-NAD(+) from nicotinate D-ribonucleotide: step 1/1. Functionally, catalyzes the reversible adenylation of nicotinate mononucleotide (NaMN) to nicotinic acid adenine dinucleotide (NaAD). In Saccharopolyspora erythraea (strain ATCC 11635 / DSM 40517 / JCM 4748 / NBRC 13426 / NCIMB 8594 / NRRL 2338), this protein is Probable nicotinate-nucleotide adenylyltransferase.